A 49-amino-acid polypeptide reads, in one-letter code: Small ribosomal subunit protein uS14B (49 aa).

The protein belongs to the universal ribosomal protein uS14 family. Zinc-binding uS14 subfamily. As to quaternary structure, part of the 30S ribosomal subunit.

In terms of biological role, binds 16S rRNA, required for the assembly of 30S particles. This chain is Small ribosomal subunit protein uS14B, found in Natronomonas pharaonis (strain ATCC 35678 / DSM 2160 / CIP 103997 / JCM 8858 / NBRC 14720 / NCIMB 2260 / Gabara) (Halobacterium pharaonis).